Consider the following 381-residue polypeptide: DnaJ-related protein spj1 (381 aa).

Residues 5–74 (NFSQKQILGV…RKIYDAYGEE (70 aa)) form the J domain. Residues 72–93 (GEEGLNGQPGGPGGGPGEGFPG) form a disordered region. The span at 78-93 (GQPGGPGGGPGEGFPG) shows a compositional bias: gly residues. The CR-type zinc-finger motif lies at 138–225 (GGSFTLEIPV…CKGERVAEVV (88 aa)). CXXCXGXG motif repeat units follow at residues 151 to 158 (CSVCSGQG), 172 to 179 (CPVCGGSG), 199 to 206 (CNACNGNG), and 213 to 220 (CPRCKGER). The Prevents secretion from ER signature appears at 378–381 (FDEL).

It is found in the endoplasmic reticulum. This Schizosaccharomyces pombe (strain 972 / ATCC 24843) (Fission yeast) protein is DnaJ-related protein spj1 (spj1).